The following is a 199-amino-acid chain: Cytochrome c oxidase subunit 2 (199 aa).

A helical transmembrane segment spans residues 1-13; sequence AICSLVLYLLTLM. Residues 14-26 are Mitochondrial matrix-facing; the sequence is LMEKLSSNTVDAQ. A helical membrane pass occupies residues 27–54; it reads EVELIWTILPAIVLILLALPSLQILYMM. Topologically, residues 55–199 are mitochondrial intermembrane; that stretch reads DEIDEPDLTL…SSLLSASSSL (145 aa). Cu cation-binding residues include H128, C163, E165, C167, H171, and M174. E165 lines the Mg(2+) pocket.

This sequence belongs to the cytochrome c oxidase subunit 2 family. Component of the cytochrome c oxidase (complex IV, CIV), a multisubunit enzyme composed of 14 subunits. The complex is composed of a catalytic core of 3 subunits MT-CO1, MT-CO2 and MT-CO3, encoded in the mitochondrial DNA, and 11 supernumerary subunits COX4I, COX5A, COX5B, COX6A, COX6B, COX6C, COX7A, COX7B, COX7C, COX8 and NDUFA4, which are encoded in the nuclear genome. The complex exists as a monomer or a dimer and forms supercomplexes (SCs) in the inner mitochondrial membrane with NADH-ubiquinone oxidoreductase (complex I, CI) and ubiquinol-cytochrome c oxidoreductase (cytochrome b-c1 complex, complex III, CIII), resulting in different assemblies (supercomplex SCI(1)III(2)IV(1) and megacomplex MCI(2)III(2)IV(2)). Found in a complex with TMEM177, COA6, COX18, COX20, SCO1 and SCO2. Interacts with TMEM177 in a COX20-dependent manner. Interacts with COX20. Interacts with COX16. Cu cation is required as a cofactor.

Its subcellular location is the mitochondrion inner membrane. It catalyses the reaction 4 Fe(II)-[cytochrome c] + O2 + 8 H(+)(in) = 4 Fe(III)-[cytochrome c] + 2 H2O + 4 H(+)(out). Its function is as follows. Component of the cytochrome c oxidase, the last enzyme in the mitochondrial electron transport chain which drives oxidative phosphorylation. The respiratory chain contains 3 multisubunit complexes succinate dehydrogenase (complex II, CII), ubiquinol-cytochrome c oxidoreductase (cytochrome b-c1 complex, complex III, CIII) and cytochrome c oxidase (complex IV, CIV), that cooperate to transfer electrons derived from NADH and succinate to molecular oxygen, creating an electrochemical gradient over the inner membrane that drives transmembrane transport and the ATP synthase. Cytochrome c oxidase is the component of the respiratory chain that catalyzes the reduction of oxygen to water. Electrons originating from reduced cytochrome c in the intermembrane space (IMS) are transferred via the dinuclear copper A center (CU(A)) of subunit 2 and heme A of subunit 1 to the active site in subunit 1, a binuclear center (BNC) formed by heme A3 and copper B (CU(B)). The BNC reduces molecular oxygen to 2 water molecules using 4 electrons from cytochrome c in the IMS and 4 protons from the mitochondrial matrix. The polypeptide is Cytochrome c oxidase subunit 2 (MT-CO2) (Dromaius novaehollandiae (Emu)).